A 137-amino-acid polypeptide reads, in one-letter code: Large ribosomal subunit protein uL16 (137 aa).

The protein belongs to the universal ribosomal protein uL16 family. Part of the 50S ribosomal subunit.

Binds 23S rRNA and is also seen to make contacts with the A and possibly P site tRNAs. In Xanthomonas axonopodis pv. citri (strain 306), this protein is Large ribosomal subunit protein uL16.